Reading from the N-terminus, the 412-residue chain is 2,3-bisphosphoglycerate-independent phosphoglycerate mutase (412 aa).

It belongs to the BPG-independent phosphoglycerate mutase family. A-PGAM subfamily.

The enzyme catalyses (2R)-2-phosphoglycerate = (2R)-3-phosphoglycerate. Its pathway is carbohydrate degradation; glycolysis; pyruvate from D-glyceraldehyde 3-phosphate: step 3/5. Functionally, catalyzes the interconversion of 2-phosphoglycerate and 3-phosphoglycerate. This Pyrococcus horikoshii (strain ATCC 700860 / DSM 12428 / JCM 9974 / NBRC 100139 / OT-3) protein is 2,3-bisphosphoglycerate-independent phosphoglycerate mutase (apgM).